The chain runs to 171 residues: MEIGQYQPNLEGDGLRIGIVQSRFNEPVCNGLADACVEELERLGVSGEDVLLVSVPGALEIPLALQKLAESGQFDALIALGAVIRGETYHFELVSNESGAGITRIGLDFNLPIANAVLTTENDKQAVARMTEKGRDAARVAVEMANLTMALDQLGDDEDEEEDEEDEEERA.

5-amino-6-(D-ribitylamino)uracil-binding positions include Phe24, 58–60, and 82–84; these read ALE and AVI. Position 87-88 (87-88) interacts with (2S)-2-hydroxy-3-oxobutyl phosphate; sequence ET. His90 acts as the Proton donor in catalysis. Residue Asn115 participates in 5-amino-6-(D-ribitylamino)uracil binding. Arg129 is a (2S)-2-hydroxy-3-oxobutyl phosphate binding site. The tract at residues 150–171 is disordered; it reads ALDQLGDDEDEEEDEEDEEERA. The span at 154–171 shows a compositional bias: acidic residues; it reads LGDDEDEEEDEEDEEERA.

Belongs to the DMRL synthase family.

It catalyses the reaction (2S)-2-hydroxy-3-oxobutyl phosphate + 5-amino-6-(D-ribitylamino)uracil = 6,7-dimethyl-8-(1-D-ribityl)lumazine + phosphate + 2 H2O + H(+). Its pathway is cofactor biosynthesis; riboflavin biosynthesis; riboflavin from 2-hydroxy-3-oxobutyl phosphate and 5-amino-6-(D-ribitylamino)uracil: step 1/2. In terms of biological role, catalyzes the formation of 6,7-dimethyl-8-ribityllumazine by condensation of 5-amino-6-(D-ribitylamino)uracil with 3,4-dihydroxy-2-butanone 4-phosphate. This is the penultimate step in the biosynthesis of riboflavin. In Burkholderia ambifaria (strain MC40-6), this protein is 6,7-dimethyl-8-ribityllumazine synthase.